Here is a 397-residue protein sequence, read N- to C-terminus: Phosphoglycerate kinase (397 aa).

Substrate contacts are provided by residues 21-23 (DFN), R36, 59-62 (HCGR), R118, and R151. ATP-binding positions include K201, E323, and 353–356 (GGDT).

Belongs to the phosphoglycerate kinase family. In terms of assembly, monomer.

It is found in the cytoplasm. It catalyses the reaction (2R)-3-phosphoglycerate + ATP = (2R)-3-phospho-glyceroyl phosphate + ADP. It participates in carbohydrate degradation; glycolysis; pyruvate from D-glyceraldehyde 3-phosphate: step 2/5. The chain is Phosphoglycerate kinase from Bartonella henselae (strain ATCC 49882 / DSM 28221 / CCUG 30454 / Houston 1) (Rochalimaea henselae).